The sequence spans 161 residues: Ribosome maturation factor RimP (161 aa).

This sequence belongs to the RimP family.

Its subcellular location is the cytoplasm. Required for maturation of 30S ribosomal subunits. This chain is Ribosome maturation factor RimP, found in Rickettsia massiliae (strain Mtu5).